We begin with the raw amino-acid sequence, 329 residues long: MSAAPEGRRMLRLEVRNAETPIERKPEWIKTKARMGPEYQALQQLVKTEDLHTVCQEAACPNIYECWEDREATFLIGGSQCTRRCDFCQIDTGKPADYDTDEPRRVADSVRRMGLRYATVTGVARDDLPDEGAWLHAETVRRIHADNPGTGVEILATDFSGNPDLLAEVFSSRPEVFAHNVETVPRIFKRIRPAFRYERSLDVITQGRDADLITKSNLILGMGETREEVSEALADLHDAGCDIITVTQYLRPSPRHLPVARWVRPEEFVEIKAEAEAIGFLGVLAGPLVRSSYRAGRLYAQSMSAKGRELPASLAHLADPANGFAQAVG.

[4Fe-4S] cluster-binding residues include Cys-55, Cys-60, Cys-66, Cys-81, Cys-85, Cys-88, and Ser-292. One can recognise a Radical SAM core domain in the interval 67 to 281 (WEDREATFLI…KAEAEAIGFL (215 aa)).

The protein belongs to the radical SAM superfamily. Lipoyl synthase family. [4Fe-4S] cluster serves as cofactor.

The protein resides in the cytoplasm. It catalyses the reaction [[Fe-S] cluster scaffold protein carrying a second [4Fe-4S](2+) cluster] + N(6)-octanoyl-L-lysyl-[protein] + 2 oxidized [2Fe-2S]-[ferredoxin] + 2 S-adenosyl-L-methionine + 4 H(+) = [[Fe-S] cluster scaffold protein] + N(6)-[(R)-dihydrolipoyl]-L-lysyl-[protein] + 4 Fe(3+) + 2 hydrogen sulfide + 2 5'-deoxyadenosine + 2 L-methionine + 2 reduced [2Fe-2S]-[ferredoxin]. It functions in the pathway protein modification; protein lipoylation via endogenous pathway; protein N(6)-(lipoyl)lysine from octanoyl-[acyl-carrier-protein]: step 2/2. Its function is as follows. Catalyzes the radical-mediated insertion of two sulfur atoms into the C-6 and C-8 positions of the octanoyl moiety bound to the lipoyl domains of lipoate-dependent enzymes, thereby converting the octanoylated domains into lipoylated derivatives. The polypeptide is Lipoyl synthase (Clavibacter sepedonicus (Clavibacter michiganensis subsp. sepedonicus)).